The chain runs to 111 residues: Prophage-derived-like uncharacterized protein YozM (111 aa).

Residues 1–24 (MKKRLIGFLVLVPALIMWGITLIE) form the signal peptide.

The polypeptide is Prophage-derived-like uncharacterized protein YozM (yozM) (Bacillus subtilis (strain 168)).